The primary structure comprises 378 residues: Beta sliding clamp (378 aa).

This sequence belongs to the beta sliding clamp family. In terms of assembly, forms a ring-shaped head-to-tail homodimer around DNA which binds and tethers DNA polymerases and other proteins to the DNA. The DNA replisome complex has a single clamp-loading complex (3 tau and 1 each of delta, delta', psi and chi subunits) which binds 3 Pol III cores (1 core on the leading strand and 2 on the lagging strand) each with a beta sliding clamp dimer. Additional proteins in the replisome are other copies of gamma, psi and chi, Ssb, DNA helicase and RNA primase.

It localises to the cytoplasm. Its function is as follows. Confers DNA tethering and processivity to DNA polymerases and other proteins. Acts as a clamp, forming a ring around DNA (a reaction catalyzed by the clamp-loading complex) which diffuses in an ATP-independent manner freely and bidirectionally along dsDNA. Initially characterized for its ability to contact the catalytic subunit of DNA polymerase III (Pol III), a complex, multichain enzyme responsible for most of the replicative synthesis in bacteria; Pol III exhibits 3'-5' exonuclease proofreading activity. The beta chain is required for initiation of replication as well as for processivity of DNA replication. This chain is Beta sliding clamp (dnaN), found in Streptococcus pneumoniae (strain ATCC BAA-255 / R6).